Here is a 360-residue protein sequence, read N- to C-terminus: Peptide chain release factor 1 (360 aa).

Position 237 is an N5-methylglutamine (Q237).

The protein belongs to the prokaryotic/mitochondrial release factor family. Methylated by PrmC. Methylation increases the termination efficiency of RF1.

The protein localises to the cytoplasm. In terms of biological role, peptide chain release factor 1 directs the termination of translation in response to the peptide chain termination codons UAG and UAA. The sequence is that of Peptide chain release factor 1 from Pseudomonas syringae pv. syringae (strain B728a).